We begin with the raw amino-acid sequence, 955 residues long: Reversion-inducing cysteine-rich protein with Kazal motifs (955 aa).

Residues 1–22 form the signal peptide; that stretch reads MSGCLQILTVLLCCRFWALVFS. Residues 28–75 form a Knot 1 repeat; sequence CVHHAADIPRCRDACEQLASIRSESRLRHLLHRLPSYCPETLSELWIC. The 5 X Knot repeats stretch occupies residues 28–326; that stretch reads CVHHAADIPR…NPVEMDLITC (299 aa). N-linked (GlcNAc...) asparagine glycosylation occurs at Asn-77. Knot repeat units follow at residues 95–132 and 142–188; these read CCELAISAECRRDCKQASSKNDISKVCKKDTENPLYSC and CCSY…LILC. N-linked (GlcNAc...) asparagine glycosylation is present at Asn-191. Knot repeat units follow at residues 207–254 and 282–326; these read CCDR…LWQC and CCFK…LITC. 2 N-linked (GlcNAc...) asparagine glycosylation sites follow: Asn-287 and Asn-375. Kazal-like domains are found at residues 615 to 661, 686 to 741, and 742 to 778; these read LFTG…SCRS, DLSE…HCQD, and ACRRPREVCAHNGESYSTVCEAFSERVAVDYQGRCHA. 5 disulfide bridges follow: Cys-621/Cys-646, Cys-623/Cys-642, Cys-631/Cys-659, Cys-704/Cys-724, and Cys-713/Cys-739. A lipid anchor (GPI-anchor amidated serine) is attached at Ser-931. A propeptide spanning residues 932-955 is cleaved from the precursor; that stretch reads SCVSISVCVLLLLCSLILTLTSDL.

It belongs to the RECK family. Interacts (via knot repeats) with wnt7a (via disordered linker region); the interaction is direct. Interacts (via knot repeats) with wnt7b (via disordered linker region); the interaction is direct. Interacts with adgra2; the interaction is direct. Expressed in the cerebral endothelium.

Its subcellular location is the cell membrane. Its function is as follows. Functions together with adgra2 to enable brain endothelial cells to selectively respond to Wnt7 signals (wnt7a or wnt7b). Plays a key role in Wnt7-specific responses: required for central nervous system (CNS) angiogenesis and blood-brain barrier regulation. Acts as a Wnt7-specific coactivator of canonical Wnt signaling by decoding Wnt ligands: acts by interacting specifically with the disordered linker region of Wnt7, thereby conferring ligand selectivity for Wnt7. Adgra2 is then required to deliver reck-bound Wnt7 to frizzled by assembling a higher-order RECK-ADGRA2-Fzd-LRP5-LRP6 complex. Also acts as a serine protease inhibitor. This Danio rerio (Zebrafish) protein is Reversion-inducing cysteine-rich protein with Kazal motifs.